We begin with the raw amino-acid sequence, 377 residues long: Unsaturated 3S-rhamnoglycuronyl hydrolase (377 aa).

Positions 1–25 (MKNQALKILTLCVLVGSAMSLKLYA) are cleaved as a signal peptide. The Proton donor role is filled by Asp161.

The protein belongs to the glycosyl hydrolase 105 family.

It is found in the periplasm. Unsaturated beta-glucuronyl hydrolase involved in ulvan degradation. Ulvan is the main polysaccharide component of the Ulvales (green seaweed) cell wall. It is composed of disaccharide building blocks comprising 3-sulfated rhamnose (Rha3S) linked to D-glucuronic acid (GlcA), L-iduronic acid (IduA), or D-xylose (Xyl). Unsaturated 3S-rhamnoglycuronyl hydrolase works together with ulvan lyases to fully degrade the ulvan polymer, catalyzing specifically the cleavage of the unsaturated 4-deoxy-L-threo-hex-4-enopyranosiduronic acid (deltaUA) of deltaUA-Rha3S disaccharides and deltaUA-Rha3S-Xyl-Rha3S tetrasaccharides, the end products of the ulvan lyase reaction. Also hydrolases deltaUA-Rha3S-IduA-Rha3S and deltaUA-Rha3S-GlcA-Rha3S tetrasaccharidestetrasaccharides. Prefers tetrasaccharides over disaccharides and prefers an uronic residue at subsite +2. The protein is Unsaturated 3S-rhamnoglycuronyl hydrolase of Formosa agariphila (strain DSM 15362 / KCTC 12365 / LMG 23005 / KMM 3901 / M-2Alg 35-1).